A 128-amino-acid chain; its full sequence is uncharacterized protein (128 aa).

In terms of tissue distribution, high expression in pituitary gland and weak in pancreas.

This is an uncharacterized protein from Homo sapiens (Human).